Reading from the N-terminus, the 215-residue chain is Ribonuclease T (215 aa).

Residues 21–195 form the Exonuclease domain; that stretch reads VVIDVETAGF…YDSKKTAELF (175 aa). Mg(2+) is bound by residues D24, E26, H182, and D187. H182 (proton donor/acceptor) is an active-site residue.

It belongs to the RNase T family. As to quaternary structure, homodimer. The cofactor is Mg(2+).

Trims short 3' overhangs of a variety of RNA species, leaving a one or two nucleotide 3' overhang. Responsible for the end-turnover of tRNA: specifically removes the terminal AMP residue from uncharged tRNA (tRNA-C-C-A). Also appears to be involved in tRNA biosynthesis. The sequence is that of Ribonuclease T from Wigglesworthia glossinidia brevipalpis.